The primary structure comprises 149 residues: Large ribosomal subunit protein bL9 (149 aa).

It belongs to the bacterial ribosomal protein bL9 family.

Binds to the 23S rRNA. The polypeptide is Large ribosomal subunit protein bL9 (Bacillus pumilus (strain SAFR-032)).